Here is a 308-residue protein sequence, read N- to C-terminus: Coenzyme PQQ synthesis protein B (308 aa).

Belongs to the PqqB family.

It functions in the pathway cofactor biosynthesis; pyrroloquinoline quinone biosynthesis. Its function is as follows. May be involved in the transport of PQQ or its precursor to the periplasm. The protein is Coenzyme PQQ synthesis protein B of Klebsiella pneumoniae subsp. pneumoniae (strain ATCC 700721 / MGH 78578).